The following is a 495-amino-acid chain: Lysine--tRNA ligase (495 aa).

Mg(2+) is bound by residues Glu-406 and Glu-413.

This sequence belongs to the class-II aminoacyl-tRNA synthetase family. In terms of assembly, homodimer. Mg(2+) serves as cofactor.

It is found in the cytoplasm. The enzyme catalyses tRNA(Lys) + L-lysine + ATP = L-lysyl-tRNA(Lys) + AMP + diphosphate. The chain is Lysine--tRNA ligase from Staphylococcus aureus (strain MRSA252).